The primary structure comprises 255 residues: Glutamate racemase (255 aa).

Substrate-binding positions include 7 to 8 and 39 to 40; these read DS and YG. Cys70 (proton donor/acceptor) is an active-site residue. Residue 71 to 72 coordinates substrate; sequence NT. Cys181 functions as the Proton donor/acceptor in the catalytic mechanism. 182 to 183 serves as a coordination point for substrate; sequence TH.

Belongs to the aspartate/glutamate racemases family.

It catalyses the reaction L-glutamate = D-glutamate. The protein operates within cell wall biogenesis; peptidoglycan biosynthesis. Functionally, provides the (R)-glutamate required for cell wall biosynthesis. The protein is Glutamate racemase of Helicobacter acinonychis (strain Sheeba).